A 123-amino-acid chain; its full sequence is MTGSCCGSTFSSLSYGGGCCQPCCCRDPCCCRPVTCQTTVCRPVTCVPRCTRPICEPCRRPVCCDPCSLQEGCCRPITCCPSSCTAVVCRPCCWATTCCQPVSVQSPCGQPTPCSTTCRTSSC.

The segment at 5–112 is 11 X 5 AA repeats of C-C-[CDPQRWG]-[APRS]-[CIPSTVD]; it reads CCGSTFSSLS…SVQSPCGQPT (108 aa).

The protein belongs to the KRTAP type 2 family. Interacts with hair keratins.

In terms of biological role, in the hair cortex, hair keratin intermediate filaments are embedded in an interfilamentous matrix, consisting of hair keratin-associated proteins (KRTAP), which are essential for the formation of a rigid and resistant hair shaft through their extensive disulfide bond cross-linking with abundant cysteine residues of hair keratins. The matrix proteins include the high-sulfur and high-glycine-tyrosine keratins. The polypeptide is Keratin-associated protein 2-2 (KRTAP2-2) (Homo sapiens (Human)).